Consider the following 618-residue polypeptide: MAKVIGIDLGTTNSCVSVMEGGNPVVITNSEGARTTPSVVSFQDNGERLVGQIAKRQAITNPHKTIMSIKRYMGTDHKETIDGKEYTPQELSAIILQKLKADAEAYLGGTVTQAVITVPAYFNDSQRQATKDAGRIAGLEVLRIINEPTAASLAYGLDKMDTNQKILVYDLGGGTFDVSILELGDGVFEVKSTNGNTKLGGDDFDQRIIDHIAETFKKDSGIDLRTDKMALQRLKEAAEKAKIELSSSTQTNINLPFITADATGPKHIDMNLTRAKFNELTQDLVEGTLTPMKKALQDAEMSIGEIDKVILVGGSTRIPAVQDAVKNFTGKEPSKDVNPDECVAMGAAVQAGVLTGDVKDVLLLDVTPLTLGIETLGGVATPLIERNTTIPTRKSQVFSTAADGQTSVEIHVVQGERQMAADNKTLGRFTLSGIAPAPRGIPQIEVTFDIDANGIVNVSAKDKGTGKEANITITASTNLSDDEVEKAVNDAKKFEEEDKKRKESVEVKNNAEQIFYQTEKTLNELGDKVSAEDKATIEEKLNALKGVKDGEDIEAIKKATEDLTQAFYQISSKIYQDAGAPGAEGFDSNMAGEANAGQNANNDDNVVDADYKVEDDEK.

Thr-175 carries the post-translational modification Phosphothreonine; by autocatalysis. The segment at 579–618 is disordered; that stretch reads GAPGAEGFDSNMAGEANAGQNANNDDNVVDADYKVEDDEK. The segment covering 591–604 has biased composition (low complexity); that stretch reads AGEANAGQNANNDD.

Belongs to the heat shock protein 70 family.

In terms of biological role, acts as a chaperone. This chain is Chaperone protein DnaK, found in Clostridium tetani (strain Massachusetts / E88).